A 723-amino-acid chain; its full sequence is Catalase-peroxidase (723 aa).

Positions 98 to 226 form a cross-link, tryptophyl-tyrosyl-methioninium (Trp-Tyr) (with M-252); that stretch reads WHSAGSYRVG…LAAVMMGLIY (129 aa). The active-site Proton acceptor is histidine 99. A cross-link (tryptophyl-tyrosyl-methioninium (Tyr-Met) (with W-98)) is located at residues 226–252; sequence YVNPEGVDGNPDPLKTAKDMRVTFARM. Heme b is bound at residue histidine 267.

The protein belongs to the peroxidase family. Peroxidase/catalase subfamily. In terms of assembly, homodimer or homotetramer. The cofactor is heme b. Post-translationally, formation of the three residue Trp-Tyr-Met cross-link is important for the catalase, but not the peroxidase activity of the enzyme.

The catalysed reaction is H2O2 + AH2 = A + 2 H2O. It catalyses the reaction 2 H2O2 = O2 + 2 H2O. Bifunctional enzyme with both catalase and broad-spectrum peroxidase activity. This is Catalase-peroxidase from Vibrio vulnificus (strain YJ016).